We begin with the raw amino-acid sequence, 1447 residues long: Baculoviral IAP repeat-containing protein 1b (1447 aa).

3 BIR repeats span residues 60 to 127 (EAKR…CEFL), 159 to 227 (EEAR…CEFL), and 278 to 345 (EELR…CVFL). Zn(2+) is bound by residues C315, C318, H335, and C342. The region spanning 508-802 (SVMCVEGEAG…EFLAAVRLTE (295 aa)) is the NACHT domain. K520 is an ATP binding site.

As to quaternary structure, component of the NLRC4 inflammasome, at least composed of NLRC4, caspase-1 (CASP1) and some NAIP protein. Interacts with S.typhimurium (Salmonella) PrgJ and B.thailandensis BsaK.

In terms of biological role, sensor component of the NLRC4 inflammasome that specifically recognizes and binds type III secretion system (T3SS) rod proteins such as S.typhimurium (Salmonella) PrgJ and B.thailandensis BsaK from pathogenic bacteria. Association of pathogenic bacteria proteins drives in turn drive assembly and activation of the NLRC4 inflammasome, promoting caspase-1 activation, cytokine production and macrophage pyroptosis. The NLRC4 inflammasome is activated as part of the innate immune response to a range of intracellular bacteria. The NLRC4 inflammasome senses Gram-negative bacteria such as L.pneumophila and P.aeruginosa, enteric pathogens S.typhimurium (Salmonella) and S.flexneri. Prevents motor-neuron apoptosis induced by a variety of signals. The chain is Baculoviral IAP repeat-containing protein 1b (Naip2) from Mus musculus (Mouse).